A 413-amino-acid chain; its full sequence is MKSYLVGGAVRDALLGLPVKDRDWVVVGATPQQMLDAGYQQVGRDFPVFLHPQSREEYALARTERKSGAGYTGFTCYAAPDVTLEADLLRRDLTVNALAQDADGTIIDPYGGQNDLRLRLLRHVSPAFSEDPLRVLRVARFAARYAHLGFRIAEETQALMHAMVEAGELAHLTPERVWKETESALTTRNPQVFFQTLRDCQALKVLFPEIDALYGVPAPAKWHPEIDTGLHTLMTVTMAAMLSPDVDVRFATLCHDLGKGLTPKALWPRHHGHGPAGVKLVEQLCARLRVPNDIRDLAKLVAEYHDLIHTLPILQPKTLVKLFDSIDAWRKPQRVQQIALTSEADVRGRTGFEASDYPQGRLLLEAWEVAQSVSTKEVVAAGFKGAQIREELTRRRIAAVAQWKEQRCPQPQG.

G8 and R11 together coordinate ATP. CTP contacts are provided by G8 and R11. Residues D21 and D23 each coordinate Mg(2+). Residues R91, R137, and R140 each contribute to the ATP site. CTP contacts are provided by R91, R137, and R140. One can recognise an HD domain in the interval 228–329; sequence TGLHTLMTVT…VKLFDSIDAW (102 aa).

The protein belongs to the tRNA nucleotidyltransferase/poly(A) polymerase family. Bacterial CCA-adding enzyme type 1 subfamily. Monomer. Can also form homodimers and oligomers. It depends on Mg(2+) as a cofactor. Ni(2+) is required as a cofactor.

The enzyme catalyses a tRNA precursor + 2 CTP + ATP = a tRNA with a 3' CCA end + 3 diphosphate. The catalysed reaction is a tRNA with a 3' CCA end + 2 CTP + ATP = a tRNA with a 3' CCACCA end + 3 diphosphate. Functionally, catalyzes the addition and repair of the essential 3'-terminal CCA sequence in tRNAs without using a nucleic acid template. Adds these three nucleotides in the order of C, C, and A to the tRNA nucleotide-73, using CTP and ATP as substrates and producing inorganic pyrophosphate. tRNA 3'-terminal CCA addition is required both for tRNA processing and repair. Also involved in tRNA surveillance by mediating tandem CCA addition to generate a CCACCA at the 3' terminus of unstable tRNAs. While stable tRNAs receive only 3'-terminal CCA, unstable tRNAs are marked with CCACCA and rapidly degraded. This chain is Multifunctional CCA protein, found in Klebsiella pneumoniae (strain 342).